A 217-amino-acid polypeptide reads, in one-letter code: Probable transaldolase (217 aa).

Lysine 83 serves as the catalytic Schiff-base intermediate with substrate.

Belongs to the transaldolase family. Type 3B subfamily.

The protein resides in the cytoplasm. It carries out the reaction D-sedoheptulose 7-phosphate + D-glyceraldehyde 3-phosphate = D-erythrose 4-phosphate + beta-D-fructose 6-phosphate. It functions in the pathway carbohydrate degradation; pentose phosphate pathway; D-glyceraldehyde 3-phosphate and beta-D-fructose 6-phosphate from D-ribose 5-phosphate and D-xylulose 5-phosphate (non-oxidative stage): step 2/3. Functionally, transaldolase is important for the balance of metabolites in the pentose-phosphate pathway. In Dinoroseobacter shibae (strain DSM 16493 / NCIMB 14021 / DFL 12), this protein is Probable transaldolase.